A 1854-amino-acid polypeptide reads, in one-letter code: Immunoglobulin A1 protease (1854 aa).

The N-terminal stretch at 1 to 37 (MKKFLGEKQTRFAFRKLAVGLVSAAISSLFFVSIVGV) is a signal peptide. A propeptide spanning residues 38–99 (DSVQAQEKLN…NAGAKTLPNT (62 aa)) is cleaved from the precursor. The LPXTG sorting signal motif lies at 96 to 100 (LPNTG). The residue at position 99 (T99) is a Pentaglycyl murein peptidoglycan amidated threonine. 2 helical membrane passes run 106 to 125 (TMMAAGLLLTTIGLVVFAVS) and 132 to 154 (KFLLTVLVGASVGGGLILSVDAL). The Extracellular segment spans residues 155–1854 (ENGSLLQYNA…FRKSIFENQK (1700 aa)). Residues 256 to 335 (KPELLYKETS…PKIVEKGTKK (80 aa)) enclose the G5 domain. 10 tandem repeats follow at residues 349–368 (VQPEQVAPLPEYTGVQSGAI), 369–388 (VEPEQVASLPEYSGTLSGAI), 389–406 (VEPEQIEPEIGGVQSGAI), 407–426 (VEPEQVTPLPEYTGTQAGAV), 427–446 (VSPEQVAPLPEYTGTQSGAI), 447–466 (VEPAQVTPLPEYTGVQSGAI), 467–486 (VKPAQVTPLPEYTGTQSGAI), 487–506 (VEPEQVTPSPEYTGVQAGAI), 507–526 (VEPEQVASLPEYTGSQAGAI), and 527–546 (VEPEQVEPPQEYTGNIEPAA). A 10 X 20 AA approximate tandem repeats region spans residues 349–546 (VQPEQVAPLP…EYTGNIEPAA (198 aa)). Residues 533–550 (EPPQEYTGNIEPAAPEAE) show a composition bias toward low complexity. A disordered region spans residues 533–570 (EPPQEYTGNIEPAAPEAENPTEKAQEPKEQKQEPEKNI). A compositionally biased stretch (basic and acidic residues) spans 552–570 (PTEKAQEPKEQKQEPEKNI). Zn(2+) is bound at residue H1494. E1495 is a catalytic residue. Zn(2+)-binding residues include H1498 and E1518.

This sequence belongs to the peptidase M26 family. Requires Zn(2+) as cofactor. The Gram-positive cell-wall anchor motif LPXTG is located in the N-terminal part, in contrast to such motifs in other known streptococcal and staphylococcal proteins. The protease could be cleaved by the sortase and anchored in the membrane via the two potential N-terminal transmembrane domains, whereas the propeptide located prior to the LPXTG motif would remain attached to the cell wall peptidoglycan by an amide bond.

The protein resides in the secreted. Its subcellular location is the cell wall. It is found in the membrane. It carries out the reaction Cleavage of Pro-|-Thr bond in the hinge region of the heavy chain of human IgA.. Inhibited by EDTA. Zinc metalloproteinase which cleaves human immunoglobulin A1 (IgA1) in the hinge region. This is Immunoglobulin A1 protease (iga) from Streptococcus sanguinis.